Reading from the N-terminus, the 304-residue chain is UDP-3-O-acyl-N-acetylglucosamine deacetylase (304 aa).

Residues His78, His237, and Asp241 each contribute to the Zn(2+) site. Catalysis depends on His264, which acts as the Proton donor.

This sequence belongs to the LpxC family. Requires Zn(2+) as cofactor.

It carries out the reaction a UDP-3-O-[(3R)-3-hydroxyacyl]-N-acetyl-alpha-D-glucosamine + H2O = a UDP-3-O-[(3R)-3-hydroxyacyl]-alpha-D-glucosamine + acetate. Its pathway is glycolipid biosynthesis; lipid IV(A) biosynthesis; lipid IV(A) from (3R)-3-hydroxytetradecanoyl-[acyl-carrier-protein] and UDP-N-acetyl-alpha-D-glucosamine: step 2/6. Functionally, catalyzes the hydrolysis of UDP-3-O-myristoyl-N-acetylglucosamine to form UDP-3-O-myristoylglucosamine and acetate, the committed step in lipid A biosynthesis. This Xylella fastidiosa (strain 9a5c) protein is UDP-3-O-acyl-N-acetylglucosamine deacetylase.